The sequence spans 421 residues: MIEYMNYVIKSLQSNNDYEHLTLSSRSLLNFKIPNAFKFQLSNKSTPYTYNTIDISTNKVINGSITYLYTDAKGLDKLIKDSHNINIQSIVETYNHHCKTLNINKQNVDFKSLYYGRMYYPNSHLEGMIIKKFTTNTQVVLKWVSSFNSCNIITGYFQKYGKRNFQELIVSSNDFLCGYRFLHNFIEQPSKLNNSLYNNSYISLGGEFWLAISTLSPTCATTLRYCTHSATTGRPLTLTLSFNPLFGHLSSTYSAKTSSNSAFCVQYDFNLYSIDSNLSLGCELWKQNELIQNVSQEKSKKQEIQVPPNFYNNNSNDAKQKRILNDLNTTFESSLKKIDKERAVIENFETDLYNKDFTSVWKFSTSLRDKNLCILWDGKFKGFLLSAGTELIRINTNNENNSQSLVKFYPAKLGLQLQFST.

This sequence belongs to the MDM10 family. Component of the ER-mitochondria encounter structure (ERMES) or MDM complex, composed of MMM1, MDM10, MDM12 and MDM34. Associates with the mitochondrial outer membrane sorting assembly machinery SAM(core) complex.

Its subcellular location is the mitochondrion outer membrane. Its function is as follows. Component of the ERMES/MDM complex, which serves as a molecular tether to connect the endoplasmic reticulum and mitochondria. Components of this complex are involved in the control of mitochondrial shape and protein biogenesis and may function in phospholipid exchange. MDM10 is involved in the late assembly steps of the general translocase of the mitochondrial outer membrane (TOM complex). Functions in the TOM40-specific route of the assembly of outer membrane beta-barrel proteins, including the association of TOM40 with the receptor TOM22 and small TOM proteins. Can associate with the SAM(core) complex as well as the MDM12-MMM1 complex, both involved in late steps of the major beta-barrel assembly pathway, that is responsible for biogenesis of all outer membrane beta-barrel proteins. May act as a switch that shuttles between both complexes and channels precursor proteins into the TOM40-specific pathway. Plays a role in mitochondrial morphology and in the inheritance of mitochondria. This is Mitochondrial distribution and morphology protein 10 from Vanderwaltozyma polyspora (strain ATCC 22028 / DSM 70294 / BCRC 21397 / CBS 2163 / NBRC 10782 / NRRL Y-8283 / UCD 57-17) (Kluyveromyces polysporus).